The primary structure comprises 757 residues: Centrosomal protein of 68 kDa (757 aa).

2 stretches are compositionally biased toward basic and acidic residues: residues 1–17 (MALGEEKAEAEASEDTK) and 86–96 (ANREPVAERSE). Disordered regions lie at residues 1 to 47 (MALG…RLEA), 67 to 158 (WIGT…PSLA), 192 to 259 (QPSS…GGDA), 311 to 480 (PGPQ…ESDD), 509 to 551 (PTGD…SGDP), and 597 to 618 (LDRWPFSDPDVEGQLPRKGGEQ). Polar residues predominate over residues 125 to 144 (LSSSEEFPQTLSLPRTTTIC). 2 stretches are compositionally biased toward low complexity: residues 192–206 (QPSSCSISASSTGSS) and 224–240 (VSSSLEPVVPQEPSSVV). A Phosphoserine; by PLK1 modification is found at S332. Positions 339 to 355 (FSVSPASTLKSPTNVSP) are enriched in polar residues. Basic and acidic residues-rich tracts occupy residues 405-432 (GSRDARWERREPALRGAKDRLTIGKHLD) and 439-456 (RTRDRGWPSPRPEREKRT). Residues 457 to 467 (SQSARRPTCTE) are compositionally biased toward polar residues. Residues S472 and S478 each carry the phosphoserine modification. The span at 524–543 (SDGPASFPSSSSQSQLPPGA) shows a compositional bias: low complexity.

As to quaternary structure, interacts with CNTLN; the interaction recruits CEP68 to the centrosome. Interacts with the SCF(FBXW11) complex which contains SKP1, CUL1 and FBXW11; the interaction is probably mediated by FBXW11 and the complex also contains CDK5RAP2 and PCNT. Also interacts with F-box protein BTRC. Interacts with serine/threonine-protein kinase PLK1; the interaction leads to phosphorylation of CEP68 and its subsequent degradation. Interacts with NEK2; the interaction leads to phosphorylation of CEP68. Post-translationally, phosphorylation by PLK1 is required for binding to BTRC in prometaphase. Phosphorylated directly or indirectly by NEK2. NEK2-mediated phosphorylation promotes CEP68 dissociation from the centrosome and its degradation at the onset of mitosis. In terms of processing, ubiquitinated and targeted for proteasomal degradation in early mitosis by the SCF(BTRC) and/or SCF(FBXW11) E3 ubiquitin-protein ligase complexes. Degradation is complete by prometaphase and is required for removal of CDK5RAP2 from the peripheral pericentriolar material and subsequent centriole separation.

The protein resides in the cytoplasm. The protein localises to the cytoskeleton. It localises to the microtubule organizing center. Its subcellular location is the centrosome. Functionally, involved in maintenance of centrosome cohesion, probably as part of a linker structure which prevents centrosome splitting. Required for localization of CDK5RAP2 to the centrosome during interphase. Contributes to CROCC/rootletin filament formation. This is Centrosomal protein of 68 kDa (CEP68) from Homo sapiens (Human).